The following is a 277-amino-acid chain: Phosphonates import ATP-binding protein PhnC (277 aa).

Positions 3 to 251 (IKLDKVSARH…RLQALYAQHL (249 aa)) constitute an ABC transporter domain. ATP is bound at residue 40-47 (GPSGAGKT).

Belongs to the ABC transporter superfamily. Phosphonates importer (TC 3.A.1.9.1) family. The complex is composed of two ATP-binding proteins (PhnC), two transmembrane proteins (PhnE) and a solute-binding protein (PhnD).

It is found in the cell inner membrane. The enzyme catalyses phosphonate(out) + ATP + H2O = phosphonate(in) + ADP + phosphate + H(+). In terms of biological role, part of the ABC transporter complex PhnCDE involved in phosphonates import. Responsible for energy coupling to the transport system. The sequence is that of Phosphonates import ATP-binding protein PhnC from Polaromonas sp. (strain JS666 / ATCC BAA-500).